Reading from the N-terminus, the 237-residue chain is Ubiquinone/menaquinone biosynthesis C-methyltransferase UbiE (237 aa).

2 residues coordinate S-adenosyl-L-methionine: T60 and D80.

Belongs to the class I-like SAM-binding methyltransferase superfamily. MenG/UbiE family.

It catalyses the reaction a 2-demethylmenaquinol + S-adenosyl-L-methionine = a menaquinol + S-adenosyl-L-homocysteine + H(+). The enzyme catalyses a 2-methoxy-6-(all-trans-polyprenyl)benzene-1,4-diol + S-adenosyl-L-methionine = a 5-methoxy-2-methyl-3-(all-trans-polyprenyl)benzene-1,4-diol + S-adenosyl-L-homocysteine + H(+). The protein operates within quinol/quinone metabolism; menaquinone biosynthesis; menaquinol from 1,4-dihydroxy-2-naphthoate: step 2/2. It participates in cofactor biosynthesis; ubiquinone biosynthesis. Methyltransferase required for the conversion of demethylmenaquinol (DMKH2) to menaquinol (MKH2) and the conversion of 2-polyprenyl-6-methoxy-1,4-benzoquinol (DDMQH2) to 2-polyprenyl-3-methyl-6-methoxy-1,4-benzoquinol (DMQH2). This chain is Ubiquinone/menaquinone biosynthesis C-methyltransferase UbiE, found in Syntrophotalea carbinolica (strain DSM 2380 / NBRC 103641 / GraBd1) (Pelobacter carbinolicus).